We begin with the raw amino-acid sequence, 403 residues long: Large ribosomal subunit protein uL3 (403 aa).

Residues 1–37 (MSHRKFSAPRHGSLGFLPRKRSSRHRGKVKSFPKDDP) are disordered. S13 carries the phosphoserine modification. Positions 18 to 31 (PRKRSSRHRGKVKS) are enriched in basic residues. K39 participates in a covalent cross-link: Glycyl lysine isopeptide (Lys-Gly) (interchain with G-Cter in SUMO2). N6-acetyllysine is present on K136. Glycyl lysine isopeptide (Lys-Gly) (interchain with G-Cter in SUMO2) cross-links involve residues K224 and K226. A Tele-methylhistidine modification is found at H245. An N6-acetyllysine; alternate mark is found at K286 and K294. K286 is covalently cross-linked (Glycyl lysine isopeptide (Lys-Gly) (interchain with G-Cter in SUMO2); alternate). Residue K294 forms a Glycyl lysine isopeptide (Lys-Gly) (interchain with G-Cter in SUMO1); alternate linkage. At S304 the chain carries Phosphoserine. N6-acetyllysine; alternate is present on K366. K366 participates in a covalent cross-link: Glycyl lysine isopeptide (Lys-Gly) (interchain with G-Cter in SUMO2); alternate. K373 bears the N6-acetyllysine mark. Residues K386, K393, and K399 each participate in a glycyl lysine isopeptide (Lys-Gly) (interchain with G-Cter in SUMO2) cross-link.

Belongs to the universal ribosomal protein uL3 family. As to quaternary structure, component of the large ribosomal subunit. Interacts with DHX33. In terms of processing, constitutively monomethylated at His-245 by METTL18. Methylation at His-245 regulates translation elongation by slowing ribosome traversal on tyrosine codons: slower elongation provides enough time for proper folding of synthesized proteins and prevents cellular aggregation of tyrosine-rich proteins. It is not required for incorporation of RPL3 into ribosomes.

Its subcellular location is the nucleus. The protein localises to the nucleolus. It is found in the cytoplasm. Functionally, component of the large ribosomal subunit. The ribosome is a large ribonucleoprotein complex responsible for the synthesis of proteins in the cell. This Homo sapiens (Human) protein is Large ribosomal subunit protein uL3 (RPL3).